The sequence spans 159 residues: V-type proton ATPase 16 kDa proteolipid subunit c (159 aa).

Residues 1-11 (MSEEGSPMYSP) lie on the Lumenal side of the membrane. The helical transmembrane segment at 12–32 (FFGVMGAASAMVFSALGAAYG) threads the bilayer. Residues 33–54 (TAKSGVGISAMSVMRPELIMKC) lie on the Cytoplasmic side of the membrane. A helical transmembrane segment spans residues 55-75 (IIPVVMAGIIAIYGLVVAVLI). Residues 76-93 (AGKLDEAPTYTLYQGFVH) lie on the Lumenal side of the membrane. Residues 94–114 (MGAGLSVGLSGLAAGFAIGIV) traverse the membrane as a helical segment. The Cytoplasmic portion of the chain corresponds to 115–132 (GDAGVRGTAQQPRLYVGM). Residues 133–153 (ILILIFAEVLGLYGLIVAIFL) form a helical membrane-spanning segment. At 154-159 (YTKTSS) the chain is on the lumenal side.

Belongs to the V-ATPase proteolipid subunit family. In terms of assembly, V-ATPase is a heteromultimeric enzyme made up of two complexes: the ATP-hydrolytic V1 complex and the proton translocation V0 complex. The V1 complex consists of three catalytic AB heterodimers that form a heterohexamer, three peripheral stalks each consisting of EG heterodimers, one central rotor including subunits D and F, and the regulatory subunits C and H. The proton translocation complex V0 consists of the proton transport subunit a, a ring of proteolipid subunits c9c'', rotary subunit d, subunits e and f, and two accessory subunits.

The protein resides in the vacuole membrane. Its function is as follows. Proton-conducting pore forming subunit of the V0 complex of vacuolar(H+)-ATPase (V-ATPase), a multisubunit enzyme composed of a peripheral complex (V1) that hydrolyzes ATP and a membrane integral complex (V0) that translocates protons. V-ATPase is responsible for acidifying and maintaining the pH of intracellular compartments and in some cell types, is targeted to the plasma membrane, where it is responsible for acidifying the extracellular environment. The protein is V-type proton ATPase 16 kDa proteolipid subunit c of Nephrops norvegicus (Norway lobster).